The primary structure comprises 158 residues: Snaclec crotocetin-1 (158 aa).

The signal sequence occupies residues 1–23; that stretch reads MGRFIFVSFGLLVVFLSLSGTGA. Cystine bridges form between Cys27–Cys38, Cys55–Cys152, and Cys127–Cys144. Residues 34 to 153 form the C-type lectin domain; the sequence is YDQYCYRVIK…CEEKNLFVCK (120 aa).

The protein belongs to the snaclec family. As to quaternary structure, heterodimer; disulfide-linked. Expressed by the venom gland.

The protein resides in the secreted. Interferes with one step of hemostasis (modulation of platelet aggregation, or coagulation cascade, for example). This Crotalus durissus terrificus (South American rattlesnake) protein is Snaclec crotocetin-1.